Reading from the N-terminus, the 508-residue chain is Mu-like prophage FluMu protein gp28 (508 aa).

The protein to phage Mu protein gp28.

This is Mu-like prophage FluMu protein gp28 from Haemophilus influenzae (strain ATCC 51907 / DSM 11121 / KW20 / Rd).